Consider the following 141-residue polypeptide: Endoribonuclease YbeY (141 aa).

3 residues coordinate Zn(2+): H105, H109, and D115.

It belongs to the endoribonuclease YbeY family. The cofactor is Zn(2+).

The protein resides in the cytoplasm. Functionally, single strand-specific metallo-endoribonuclease involved in late-stage 70S ribosome quality control and in maturation of the 3' terminus of the 16S rRNA. The protein is Endoribonuclease YbeY of Chloroherpeton thalassium (strain ATCC 35110 / GB-78).